A 315-amino-acid chain; its full sequence is Carbamate kinase (315 aa).

This sequence belongs to the carbamate kinase family. In terms of assembly, homodimer.

It is found in the cytoplasm. The enzyme catalyses hydrogencarbonate + NH4(+) + ATP = carbamoyl phosphate + ADP + H2O + H(+). This Thermococcus kodakarensis (strain ATCC BAA-918 / JCM 12380 / KOD1) (Pyrococcus kodakaraensis (strain KOD1)) protein is Carbamate kinase (cpkA).